The sequence spans 309 residues: Clotting factor G beta subunit (309 aa).

The signal sequence occupies residues 1–31; the sequence is MDISFLVFITLSMALFSSNVTGTSVTSRVRR. 4 disulfides stabilise this stretch: Cys38-Cys158, Cys74-Cys90, Cys205-Cys227, and Cys238-Cys268. The Peptidase S1 domain occupies 47–292; the sequence is IIGGGIATPH…YVNWLQEITF (246 aa). His89 (charge relay system) is an active-site residue. A glycan (N-linked (GlcNAc...) asparagine) is linked at Asn100. The active-site Charge relay system is the Asp138. Asn206 carries an N-linked (GlcNAc...) asparagine glycan. The Charge relay system role is filled by Ser242.

Belongs to the peptidase S1 family. As to quaternary structure, clotting factor G is a heterodimer composed of two non-covalently associated subunits, alpha and beta. Upon activation, converted to a two-chain active form linked by a disulfide bond. Forms a covalent heterodimer with intracellular coagulation inhibitor 3/LICI-3. Expressed in the hemocytes (at protein level).

The catalysed reaction is Selective cleavage of 98-Arg-|-Ile-99 bond in Limulus proclotting enzyme to form active clotting enzyme.. With respect to regulation, binding to (1-&gt;3)-beta-D-glucan to alpha subunit, induces autocatalysis and activation of beta subunit. Inhibited by intracellular coagulation inhibitor 3/LICI-3 and to a lesser extend by intracellular coagulation inhibitor 2/LICI-2. Component of the heterodimer clotting factor G which may play a role in defense mechanisms against fungi. Initiates a (1-&gt;3)-beta-glucan-sensing clotting pathway whereby the alpha subunit binds to glucans containing (1-&gt;3)-beta linkages, which are components of the fungal cell wall, and the beta subunit catalyzes the activation of proclotting enzyme. In Tachypleus tridentatus (Japanese horseshoe crab), this protein is Clotting factor G beta subunit.